A 241-amino-acid chain; its full sequence is 6-hydroxymethyl-7,8-dihydropterin pyrophosphokinase (241 aa).

Belongs to the archaeal 6-HMPDK family. Mg(2+) is required as a cofactor.

It carries out the reaction 6-hydroxymethyl-7,8-dihydropterin + ATP = (7,8-dihydropterin-6-yl)methyl diphosphate + AMP + H(+). Its pathway is cofactor biosynthesis; 5,6,7,8-tetrahydromethanopterin biosynthesis. Catalyzes the transfer of diphosphate from ATP to 6-hydroxymethyl-7,8-dihydropterin (6-HMD), leading to 6-hydroxymethyl-7,8-dihydropterin diphosphate (6-HMDP). The polypeptide is 6-hydroxymethyl-7,8-dihydropterin pyrophosphokinase (Methanocaldococcus jannaschii (strain ATCC 43067 / DSM 2661 / JAL-1 / JCM 10045 / NBRC 100440) (Methanococcus jannaschii)).